Reading from the N-terminus, the 260-residue chain is Putative ABC transporter substrate-binding lipoprotein YvgL (260 aa).

The N-terminal stretch at 1-20 is a signal peptide; the sequence is MFKKYSIFIAALTAFLLVAG. The N-palmitoyl cysteine moiety is linked to residue C21. A lipid anchor (S-diacylglycerol cysteine) is attached at C21. Residues S43, S71, A151, V178, and Y196 each contribute to the molybdate site.

It belongs to the bacterial solute-binding protein ModA family.

The protein resides in the cell membrane. The chain is Putative ABC transporter substrate-binding lipoprotein YvgL (yvgL) from Bacillus subtilis (strain 168).